Reading from the N-terminus, the 230-residue chain is Ribonuclease 3 (230 aa).

The region spanning 1–134 (MKQLEELLST…FLGALLLDKG (134 aa)) is the RNase III domain. Glu-47 contacts Mg(2+). Residue Asp-51 is part of the active site. Asp-120 and Glu-123 together coordinate Mg(2+). The active site involves Glu-123. Positions 160–229 (DYKTCLQEFL…AKNALAQLSE (70 aa)) constitute a DRBM domain.

This sequence belongs to the ribonuclease III family. In terms of assembly, homodimer. It depends on Mg(2+) as a cofactor.

It is found in the cytoplasm. It carries out the reaction Endonucleolytic cleavage to 5'-phosphomonoester.. Its function is as follows. Digests double-stranded RNA. Involved in the processing of primary rRNA transcript to yield the immediate precursors to the large and small rRNAs (23S and 16S). Processes some mRNAs, and tRNAs when they are encoded in the rRNA operon. Processes pre-crRNA and tracrRNA of type II CRISPR loci if present in the organism. The protein is Ribonuclease 3 of Streptococcus pyogenes serotype M28 (strain MGAS6180).